We begin with the raw amino-acid sequence, 757 residues long: Xaa-Pro dipeptidyl-peptidase (757 aa).

Catalysis depends on charge relay system residues serine 348, aspartate 468, and histidine 498.

It belongs to the peptidase S15 family. Homodimer.

Its subcellular location is the cytoplasm. The catalysed reaction is Hydrolyzes Xaa-Pro-|- bonds to release unblocked, N-terminal dipeptides from substrates including Ala-Pro-|-p-nitroanilide and (sequentially) Tyr-Pro-|-Phe-Pro-|-Gly-Pro-|-Ile.. Functionally, removes N-terminal dipeptides sequentially from polypeptides having unsubstituted N-termini provided that the penultimate residue is proline. This Streptococcus pneumoniae serotype 19F (strain G54) protein is Xaa-Pro dipeptidyl-peptidase.